Here is a 348-residue protein sequence, read N- to C-terminus: Anthranilate phosphoribosyltransferase (348 aa).

5-phospho-alpha-D-ribose 1-diphosphate contacts are provided by residues glycine 83, 86–87 (GD), threonine 91, 93–96 (NVST), 111–119 (KHGNRAASS), and threonine 123. Anthranilate is bound at residue glycine 83. Serine 95 is a Mg(2+) binding site. Position 114 (asparagine 114) interacts with anthranilate. Arginine 169 contributes to the anthranilate binding site. 2 residues coordinate Mg(2+): aspartate 227 and glutamate 228.

This sequence belongs to the anthranilate phosphoribosyltransferase family. In terms of assembly, homodimer. The cofactor is Mg(2+).

It catalyses the reaction N-(5-phospho-beta-D-ribosyl)anthranilate + diphosphate = 5-phospho-alpha-D-ribose 1-diphosphate + anthranilate. It participates in amino-acid biosynthesis; L-tryptophan biosynthesis; L-tryptophan from chorismate: step 2/5. Functionally, catalyzes the transfer of the phosphoribosyl group of 5-phosphorylribose-1-pyrophosphate (PRPP) to anthranilate to yield N-(5'-phosphoribosyl)-anthranilate (PRA). The polypeptide is Anthranilate phosphoribosyltransferase (Thermobifida fusca (strain YX)).